Consider the following 105-residue polypeptide: uncharacterized protein (105 aa).

In terms of domain architecture, ABM spans 14 to 104; the sequence is HYITACLKII…VEWLMKSNVN (91 aa).

This is an uncharacterized protein from Bacillus subtilis (strain 168).